The primary structure comprises 84 residues: uncharacterized protein (84 aa).

In terms of domain architecture, LITAF spans 1–83 (MDDKFTTLPC…CKQAVFVYKI (83 aa)). Zn(2+) contacts are provided by C21 and C24. The segment at 39-61 (MSWVVCTAITLACLPCCCIPFLC) is membrane-binding amphipathic helix. Zn(2+) is bound by residues C71 and C74.

The protein resides in the host membrane. This is an uncharacterized protein from Dryophytes versicolor (chameleon treefrog).